The primary structure comprises 245 residues: tRNA pseudouridine synthase A (245 aa).

The Nucleophile role is filled by D52. A substrate-binding site is contributed by Y111.

This sequence belongs to the tRNA pseudouridine synthase TruA family. In terms of assembly, homodimer.

The catalysed reaction is uridine(38/39/40) in tRNA = pseudouridine(38/39/40) in tRNA. In terms of biological role, formation of pseudouridine at positions 38, 39 and 40 in the anticodon stem and loop of transfer RNAs. This Rickettsia bellii (strain RML369-C) protein is tRNA pseudouridine synthase A.